Reading from the N-terminus, the 403-residue chain is Phosphoglycerate kinase (403 aa).

Substrate contacts are provided by residues 22–24 (DLN), R37, 60–63 (HLGR), R119, and R156. Residues K206, G302, E333, and 359–362 (GGDS) each bind ATP.

Belongs to the phosphoglycerate kinase family. In terms of assembly, monomer.

It localises to the cytoplasm. The catalysed reaction is (2R)-3-phosphoglycerate + ATP = (2R)-3-phospho-glyceroyl phosphate + ADP. Its pathway is carbohydrate degradation; glycolysis; pyruvate from D-glyceraldehyde 3-phosphate: step 2/5. This chain is Phosphoglycerate kinase, found in Streptomyces griseus subsp. griseus (strain JCM 4626 / CBS 651.72 / NBRC 13350 / KCC S-0626 / ISP 5235).